We begin with the raw amino-acid sequence, 435 residues long: Trigger factor (435 aa).

Residues D161–P246 enclose the PPIase FKBP-type domain.

Belongs to the FKBP-type PPIase family. Tig subfamily.

It localises to the cytoplasm. The enzyme catalyses [protein]-peptidylproline (omega=180) = [protein]-peptidylproline (omega=0). In terms of biological role, involved in protein export. Acts as a chaperone by maintaining the newly synthesized protein in an open conformation. Functions as a peptidyl-prolyl cis-trans isomerase. This Psychromonas ingrahamii (strain DSM 17664 / CCUG 51855 / 37) protein is Trigger factor.